The primary structure comprises 102 residues: NADH-quinone oxidoreductase subunit K (102 aa).

Transmembrane regions (helical) follow at residues 6 to 26, 30 to 50, and 62 to 82; these read LEHG…GLMV, ILFV…AFIV, and VMFI…LAIL.

It belongs to the complex I subunit 4L family. In terms of assembly, NDH-1 is composed of 13 different subunits. Subunits NuoA, H, J, K, L, M, N constitute the membrane sector of the complex.

The protein localises to the cell inner membrane. It carries out the reaction a quinone + NADH + 5 H(+)(in) = a quinol + NAD(+) + 4 H(+)(out). Functionally, NDH-1 shuttles electrons from NADH, via FMN and iron-sulfur (Fe-S) centers, to quinones in the respiratory chain. The immediate electron acceptor for the enzyme in this species is believed to be ubiquinone. Couples the redox reaction to proton translocation (for every two electrons transferred, four hydrogen ions are translocated across the cytoplasmic membrane), and thus conserves the redox energy in a proton gradient. The sequence is that of NADH-quinone oxidoreductase subunit K from Pseudomonas putida (strain W619).